The primary structure comprises 132 residues: HLA class I histocompatibility antigen protein P5 (132 aa).

As to expression, expressed in lymphoid tissues; Detected in spleen as well as in B-cell lines, NK cell lines and activated lymphocytes.

The sequence is that of HLA class I histocompatibility antigen protein P5 (HCP5) from Homo sapiens (Human).